Here is a 446-residue protein sequence, read N- to C-terminus: N-succinylarginine dihydrolase (446 aa).

Substrate contacts are provided by residues 19 to 28 (AGLSYGNVAS), Asn-110, and 137 to 138 (HR). Residue Glu-174 is part of the active site. Substrate is bound at residue Arg-214. Residue His-250 is part of the active site. The substrate site is built by Asp-252 and Asn-363. Cys-369 serves as the catalytic Nucleophile.

It belongs to the succinylarginine dihydrolase family. As to quaternary structure, homodimer.

It catalyses the reaction N(2)-succinyl-L-arginine + 2 H2O + 2 H(+) = N(2)-succinyl-L-ornithine + 2 NH4(+) + CO2. Its pathway is amino-acid degradation; L-arginine degradation via AST pathway; L-glutamate and succinate from L-arginine: step 2/5. In terms of biological role, catalyzes the hydrolysis of N(2)-succinylarginine into N(2)-succinylornithine, ammonia and CO(2). In Pseudoalteromonas atlantica (strain T6c / ATCC BAA-1087), this protein is N-succinylarginine dihydrolase.